Consider the following 90-residue polypeptide: Acylphosphatase (90 aa).

One can recognise an Acylphosphatase-like domain in the interval 5–90 (CEKFVVSGIV…CREYQGFEIL (86 aa)). Active-site residues include Arg20 and Asn38.

Belongs to the acylphosphatase family.

The enzyme catalyses an acyl phosphate + H2O = a carboxylate + phosphate + H(+). The sequence is that of Acylphosphatase (acyP) from Vibrio vulnificus (strain CMCP6).